We begin with the raw amino-acid sequence, 242 residues long: Carboxy-S-adenosyl-L-methionine synthase (242 aa).

Residues Y39, G64 to S66, D89 to N90, D117 to I118, N132, and R199 each bind S-adenosyl-L-methionine.

Belongs to the class I-like SAM-binding methyltransferase superfamily. Cx-SAM synthase family. As to quaternary structure, homodimer.

The catalysed reaction is prephenate + S-adenosyl-L-methionine = carboxy-S-adenosyl-L-methionine + 3-phenylpyruvate + H2O. Catalyzes the conversion of S-adenosyl-L-methionine (SAM) to carboxy-S-adenosyl-L-methionine (Cx-SAM). The chain is Carboxy-S-adenosyl-L-methionine synthase from Aliivibrio fischeri (strain MJ11) (Vibrio fischeri).